We begin with the raw amino-acid sequence, 372 residues long: O-methyltransferase bfoE (372 aa).

S-adenosyl-L-methionine is bound at residue tryptophan 186. The Proton acceptor role is filled by histidine 285.

The protein belongs to the class I-like SAM-binding methyltransferase superfamily. Cation-independent O-methyltransferase family.

It functions in the pathway secondary metabolite biosynthesis. In terms of biological role, cytochrome P450 monooxygenase; part of the gene cluster that mediates the biosynthesis of bifonsecin B, a dimeric gamma-naphthopyrone. The first step in the biosynthesis of bifonsecin B is the production of gamma-naphthopyrone precursor YWA1 by the non-reducing polyketide synthase albA, via condensation of one acetyl-CoA starter unit with 6 malonyl-CoA units. YWA1 is then methylated by bfoE at position C-6 to yield foncesin which is further methylated at position C-8 by bfoD to produce fonsecin B. A key enzyme in the biosynthetic pathway is the cytochrome P450 monooxygenase bfoB which catalyzes the oxidative dimerization of fonsecin B to bifonsecin B. Bfob also catalyzes the oxidative dimerization of rubrofusarin B into nigerone. The stereoselectivity of bfoB is influenced by the two natural monomeric substrates; homodimerization of fonsecin B yields a stereochemically pure biaryl, M-foncerine B, while rubrofusarin B yields a mixture of enantiomers M- and P-nigerone. This Aspergillus brasiliensis (strain CBS 101740 / IMI 381727 / IBT 21946) protein is O-methyltransferase bfoE.